The sequence spans 326 residues: Ketol-acid reductoisomerase (NADP(+)) (326 aa).

The KARI N-terminal Rossmann domain maps to 1–180; sequence MDIIHDNAAD…GLTRGGVLEC (180 aa). NADP(+)-binding positions include 24–27, arginine 47, and serine 51; that span reads YGAQ. The active site involves histidine 106. Glycine 132 contacts NADP(+). A KARI C-terminal knotted domain is found at 181–326; sequence TMAQETYEDL…AKIRSLFERN (146 aa). Residues aspartate 189, glutamate 193, glutamate 225, and glutamate 229 each coordinate Mg(2+). A substrate-binding site is contributed by serine 250.

This sequence belongs to the ketol-acid reductoisomerase family. It depends on Mg(2+) as a cofactor.

The enzyme catalyses (2R)-2,3-dihydroxy-3-methylbutanoate + NADP(+) = (2S)-2-acetolactate + NADPH + H(+). It catalyses the reaction (2R,3R)-2,3-dihydroxy-3-methylpentanoate + NADP(+) = (S)-2-ethyl-2-hydroxy-3-oxobutanoate + NADPH + H(+). It functions in the pathway amino-acid biosynthesis; L-isoleucine biosynthesis; L-isoleucine from 2-oxobutanoate: step 2/4. The protein operates within amino-acid biosynthesis; L-valine biosynthesis; L-valine from pyruvate: step 2/4. In terms of biological role, involved in the biosynthesis of branched-chain amino acids (BCAA). Catalyzes an alkyl-migration followed by a ketol-acid reduction of (S)-2-acetolactate (S2AL) to yield (R)-2,3-dihydroxy-isovalerate. In the isomerase reaction, S2AL is rearranged via a Mg-dependent methyl migration to produce 3-hydroxy-3-methyl-2-ketobutyrate (HMKB). In the reductase reaction, this 2-ketoacid undergoes a metal-dependent reduction by NADPH to yield (R)-2,3-dihydroxy-isovalerate. In Akkermansia muciniphila (strain ATCC BAA-835 / DSM 22959 / JCM 33894 / BCRC 81048 / CCUG 64013 / CIP 107961 / Muc), this protein is Ketol-acid reductoisomerase (NADP(+)).